The following is a 525-amino-acid chain: GMP synthase [glutamine-hydrolyzing] (525 aa).

The Glutamine amidotransferase type-1 domain maps to 8–206 (PLLILDFGSQ…VVDICKASTD (199 aa)). The active-site Nucleophile is the Cys-85. Active-site residues include His-180 and Glu-182. One can recognise a GMPS ATP-PPase domain in the interval 207-400 (WTPEHIIDEA…LGLPHDMVYR (194 aa)). 234 to 240 (SGGVDSS) is an ATP binding site.

As to quaternary structure, homodimer.

The catalysed reaction is XMP + L-glutamine + ATP + H2O = GMP + L-glutamate + AMP + diphosphate + 2 H(+). The protein operates within purine metabolism; GMP biosynthesis; GMP from XMP (L-Gln route): step 1/1. Functionally, catalyzes the synthesis of GMP from XMP. The protein is GMP synthase [glutamine-hydrolyzing] of Legionella pneumophila (strain Paris).